We begin with the raw amino-acid sequence, 723 residues long: Catalase-peroxidase (723 aa).

Positions 96–224 (WHAAGSYRVA…LAAVMMGLIY (129 aa)) form a cross-link, tryptophyl-tyrosyl-methioninium (Trp-Tyr) (with M-250). His-97 acts as the Proton acceptor in catalysis. A cross-link (tryptophyl-tyrosyl-methioninium (Tyr-Met) (with W-96)) is located at residues 224-250 (YVNPEGVDGQPDPLKTAQDVRVTFARM). His-265 is a binding site for heme b.

Belongs to the peroxidase family. Peroxidase/catalase subfamily. In terms of assembly, homodimer or homotetramer. Requires heme b as cofactor. Post-translationally, formation of the three residue Trp-Tyr-Met cross-link is important for the catalase, but not the peroxidase activity of the enzyme.

The catalysed reaction is H2O2 + AH2 = A + 2 H2O. The enzyme catalyses 2 H2O2 = O2 + 2 H2O. Functionally, bifunctional enzyme with both catalase and broad-spectrum peroxidase activity. This is Catalase-peroxidase from Leptothrix cholodnii (strain ATCC 51168 / LMG 8142 / SP-6) (Leptothrix discophora (strain SP-6)).